A 373-amino-acid polypeptide reads, in one-letter code: 3-isopropylmalate dehydrogenase AMT6 (373 aa).

77-79 is an NADP(+) binding site; the sequence is VGG. Residues Arg-97 and Arg-136 each coordinate substrate. Residues Asp-227, Asp-252, and Asp-256 each contribute to the Mg(2+) site. 284-289 serves as a coordination point for NADP(+); the sequence is SRIRGL.

The protein belongs to the isocitrate and isopropylmalate dehydrogenases family. As to quaternary structure, homodimer. Mg(2+) is required as a cofactor. It depends on Mn(2+) as a cofactor.

It carries out the reaction (2R,3S)-3-isopropylmalate + NAD(+) = 4-methyl-2-oxopentanoate + CO2 + NADH. It functions in the pathway amino-acid biosynthesis; L-leucine biosynthesis; L-leucine from 3-methyl-2-oxobutanoate: step 3/4. It participates in mycotoxin biosynthesis. In terms of biological role, 3-isopropylmalate dehydrogenase; part of the gene clusters that mediate the biosynthesis of AM-toxins, host-selective toxins (HSTs) causing Alternaria blotch on apple, a worldwide distributed disease. AM-toxins are cyclic depsipeptides containing the 3 residues 2-hydroxy-isovaleric acid (2-HIV), dehydroalanine, L-alanine which are common for all 3 AM-toxins I to III. The fourth precursor is L-alpha-amino-methoxyphenyl-valeric acid (L-Amv) for AM-toxin I, L-alpha-amino-phenyl-valeric acid (L-Apv) for AM-toxin II, and L-alpha-amino-hydroxyphenyl-valeric acid (L-Ahv) for AM-toxin III. AM-toxins have two target sites for affecting susceptible apple cells; they cause invagination of the plasma membrane and electrolyte loss and chloroplast disorganization. The non-ribosomal peptide synthetase AMT1 contains 4 catalytic modules and is responsible for activation of each residue in AM-toxin. The aldo-keto reductase AMT2 catalyzes the conversion of 2-keto-isovaleric acid (2-KIV) to 2-hydroxy-isovaleric acid (2-HIV), one of the precursor residues incorporated by AMT1 during AM-toxin biosynthesis, by reduction of its ketone to an alcohol. The cytochrome P450 monooxygenase AMT3 and the thioesterase AMT4 are also important for AM-toxin production, but their exact function within the AM-toxin biosynthesis are not known yet. Up to 21 proteins (including AMT1 to AMT4) are predicted to be involved in AM-toxin biosynthesis since their expression ishighly up-regulated in AM-toxin-producing cultures. This Alternaria alternata (Alternaria rot fungus) protein is 3-isopropylmalate dehydrogenase AMT6.